Consider the following 494-residue polypeptide: Probable malate:quinone oxidoreductase (494 aa).

The protein belongs to the MQO family. FAD serves as cofactor.

The enzyme catalyses (S)-malate + a quinone = a quinol + oxaloacetate. It participates in carbohydrate metabolism; tricarboxylic acid cycle; oxaloacetate from (S)-malate (quinone route): step 1/1. This is Probable malate:quinone oxidoreductase from Micrococcus luteus (strain ATCC 4698 / DSM 20030 / JCM 1464 / CCM 169 / CCUG 5858 / IAM 1056 / NBRC 3333 / NCIMB 9278 / NCTC 2665 / VKM Ac-2230) (Micrococcus lysodeikticus).